The primary structure comprises 388 residues: Protein RecA (388 aa).

79–86 (GPESSGKT) is an ATP binding site. A disordered region spans residues 347 to 388 (IDGEEVSEQDTENKKDEPKKEEAVNEEVPLDLGDELEIEIEE). Residues 357–369 (TENKKDEPKKEEA) show a composition bias toward basic and acidic residues. Positions 370–388 (VNEEVPLDLGDELEIEIEE) are enriched in acidic residues.

This sequence belongs to the RecA family.

The protein resides in the cytoplasm. In terms of biological role, can catalyze the hydrolysis of ATP in the presence of single-stranded DNA, the ATP-dependent uptake of single-stranded DNA by duplex DNA, and the ATP-dependent hybridization of homologous single-stranded DNAs. It interacts with LexA causing its activation and leading to its autocatalytic cleavage. This chain is Protein RecA, found in Streptococcus pneumoniae (strain Hungary19A-6).